Consider the following 969-residue polypeptide: Leucine--tRNA ligase (969 aa).

A 'HIGH' region motif is present at residues 46 to 56; sequence PYLNGVLHAGH. The 'KMSKS' region signature appears at 658-662; that stretch reads KLSKS. Lys661 is an ATP binding site.

The protein belongs to the class-I aminoacyl-tRNA synthetase family.

The protein resides in the cytoplasm. The enzyme catalyses tRNA(Leu) + L-leucine + ATP = L-leucyl-tRNA(Leu) + AMP + diphosphate. The polypeptide is Leucine--tRNA ligase (Methanococcus aeolicus (strain ATCC BAA-1280 / DSM 17508 / OCM 812 / Nankai-3)).